Here is a 214-residue protein sequence, read N- to C-terminus: Guanylate kinase (214 aa).

One can recognise a Guanylate kinase-like domain in the interval 6 to 192; sequence GTLYIISAPS…ALEDLKAIFR (187 aa). 13 to 20 serves as a coordination point for ATP; the sequence is APSGAGKT.

It belongs to the guanylate kinase family.

It is found in the cytoplasm. The enzyme catalyses GMP + ATP = GDP + ADP. Essential for recycling GMP and indirectly, cGMP. This chain is Guanylate kinase, found in Pseudomonas savastanoi pv. phaseolicola (strain 1448A / Race 6) (Pseudomonas syringae pv. phaseolicola (strain 1448A / Race 6)).